Here is a 126-residue protein sequence, read N- to C-terminus: Follitropin subunit beta (126 aa).

Positions 1–19 are cleaved as a signal peptide; the sequence is MKLIQLCILFWCWRAICCQ. 6 disulfide bridges follow: Cys21-Cys69, Cys35-Cys84, Cys38-Cys122, Cys46-Cys100, Cys50-Cys102, and Cys105-Cys112. N-linked (GlcNAc...) asparagine glycans are attached at residues Asn25 and Asn42.

The protein belongs to the glycoprotein hormones subunit beta family. Heterodimer. The active follitropin is a heterodimer composed of an alpha chain/CGA shared with other hormones and a unique beta chain/FSHB shown here.

It is found in the secreted. Its function is as follows. Together with the alpha chain CGA constitutes follitropin, the follicle-stimulating hormone, and provides its biological specificity to the hormone heterodimer. Binds FSHR, a G protein-coupled receptor, on target cells to activate downstream signaling pathways. Follitropin is involved in follicle development and spermatogenesis in reproductive organs. The polypeptide is Follitropin subunit beta (FSHB) (Phodopus sungorus (Striped hairy-footed hamster)).